Here is a 580-residue protein sequence, read N- to C-terminus: MSDTWSSIQAHKKQLDSLRERLQRRRKQDSGHLDLRNPEAALSPTFRSDSPVPTAPTSGGPKPSTASAVPELATDPELEKKLLHHLSDLALTLPTDAVSICLAISTPDAPATQDGVESLLQKFAAQELIEVKRGLLQDDAHPTLVTYADHSKLSAMMGAVAEKKGPGEVAGTVTGQKRRAEQDSTTVAAFASSLVSGLNSSASEPAKEPAKKSRKHAASDVDLEIESLLNQQSTKEQQSKKVSQEILELLNTTTAKEQSIVEKFRSRGRAQVQEFCDYGTKEECMKASDADRPCRKLHFRRIINKHTDESLGDCSFLNTCFHMDTCKYVHYEIDACMDSEAPGSKDHTPSQELALTQSVGGDSSADRLFPPQWICCDIRYLDVSILGKFAVVMADPPWDIHMELPYGTLTDDEMRRLNIPVLQDDGFLFLWVTGRAMELGRECLNLWGYERVDEIIWVKTNQLQRIIRTGRTGHWLNHGKEHCLVGVKGNPQGFNQGLDCDVIVAEVRSTSHKPDEIYGMIERLSPGTRKIELFGRPHNVQPNWITLGNQLDGIHLLDPDVVARFKQRYPDGIISKPKNL.

Residues 1-70 (MSDTWSSIQA…PKPSTASAVP (70 aa)) are disordered. Serine 2 is subject to N-acetylserine; alternate. Serine 2 is subject to Phosphoserine; alternate. The span at 28 to 37 (QDSGHLDLRN) shows a compositional bias: basic and acidic residues. Phosphoserine is present on residues serine 43, serine 48, and serine 50. Residues lysine 177, lysine 211, lysine 212, and lysine 215 each participate in a glycyl lysine isopeptide (Lys-Gly) (interchain with G-Cter in SUMO1) cross-link. The segment at 198–219 (LNSSASEPAKEPAKKSRKHAAS) is disordered. Positions 210–215 (AKKSRK) match the Nuclear localization signal motif. Phosphoserine occurs at positions 219 and 243. Residue threonine 348 is modified to Phosphothreonine. At serine 350 the chain carries Phosphoserine. S-adenosyl-L-methionine contacts are provided by residues 377 to 378 (DI) and aspartate 395. Residues 396–410 (PPWDIHMELPYGTLT) form a gate loop 1 region. Interaction with METTL14 stretches follow at residues 450–454 (ERVDE) and 464–480 (QRII…NHGK). The interval 462 to 479 (QLQRIIRTGRTGHWLNHG) is interphase loop. A positively charged region required for RNA-binding region spans residues 465-478 (RIIRTGRTGHWLNH). The interval 507-515 (VRSTSHKPD) is gate loop 2. Residues lysine 513, 536 to 539 (RPHN), and 549 to 550 (NQ) contribute to the S-adenosyl-L-methionine site.

It belongs to the MT-A70-like family. Heterodimer; heterodimerizes with METTL14 to form an antiparallel heterodimer that constitutes an active methyltransferase. Component of the WMM complex, a N6-methyltransferase complex composed of a catalytic subcomplex, named MAC, and of an associated subcomplex, named MACOM. The MAC subcomplex is composed of METTL3 and METTL14. The MACOM subcomplex is composed of WTAP, ZC3H13, CBLL1/HAKAI, VIRMA, and, in some cases of RBM15 (RBM15 or RBM15B). Interacts with NCBP1/CBP80. Interacts with EIF4E. Interacts with EIF3B. Sumoylation inhibits the N6-adenosine-methyltransferase activity. Sumoylation does not affect subcellular location or interaction with METTL14. Desumoylated by SENP1. Widely expressed at low level. Expressed in spleen, thymus, prostate, testis, ovary, small intestine, colon and peripheral blood leukocytes.

The protein resides in the nucleus. The protein localises to the nucleus speckle. It is found in the cytoplasm. The enzyme catalyses an adenosine in mRNA + S-adenosyl-L-methionine = an N(6)-methyladenosine in mRNA + S-adenosyl-L-homocysteine + H(+). Methyltransferase activity is regulated by miRNAs via a sequence pairing mechanism. Methyltransferase activity is inhibited by sumoylation. The METTL3-METTL14 heterodimer forms a N6-methyltransferase complex that methylates adenosine residues at the N(6) position of some RNAs and regulates various processes such as the circadian clock, differentiation of embryonic and hematopoietic stem cells, cortical neurogenesis, response to DNA damage, differentiation of T-cells and primary miRNA processing. In the heterodimer formed with METTL14, METTL3 constitutes the catalytic core. N6-methyladenosine (m6A), which takes place at the 5'-[AG]GAC-3' consensus sites of some mRNAs, plays a role in mRNA stability, processing, translation efficiency and editing. M6A acts as a key regulator of mRNA stability: methylation is completed upon the release of mRNA into the nucleoplasm and promotes mRNA destabilization and degradation. In embryonic stem cells (ESCs), m6A methylation of mRNAs encoding key naive pluripotency-promoting transcripts results in transcript destabilization, promoting differentiation of ESCs. M6A regulates the length of the circadian clock: acts as an early pace-setter in the circadian loop by putting mRNA production on a fast-track for facilitating nuclear processing, thereby providing an early point of control in setting the dynamics of the feedback loop. M6A also regulates circadian regulation of hepatic lipid metabolism. M6A regulates spermatogonial differentiation and meiosis and is essential for male fertility and spermatogenesis. Also required for oogenesis. Involved in the response to DNA damage: in response to ultraviolet irradiation, METTL3 rapidly catalyzes the formation of m6A on poly(A) transcripts at DNA damage sites, leading to the recruitment of POLK to DNA damage sites. M6A is also required for T-cell homeostasis and differentiation: m6A methylation of transcripts of SOCS family members (SOCS1, SOCS3 and CISH) in naive T-cells promotes mRNA destabilization and degradation, promoting T-cell differentiation. Inhibits the type I interferon response by mediating m6A methylation of IFNB. M6A also takes place in other RNA molecules, such as primary miRNA (pri-miRNAs). Mediates m6A methylation of Xist RNA, thereby participating in random X inactivation: m6A methylation of Xist leads to target YTHDC1 reader on Xist and promote transcription repression activity of Xist. M6A also regulates cortical neurogenesis: m6A methylation of transcripts related to transcription factors, neural stem cells, the cell cycle and neuronal differentiation during brain development promotes their destabilization and decay, promoting differentiation of radial glial cells. METTL3 mediates methylation of pri-miRNAs, marking them for recognition and processing by DGCR8. Acts as a positive regulator of mRNA translation independently of the methyltransferase activity: promotes translation by interacting with the translation initiation machinery in the cytoplasm. Its overexpression in a number of cancer cells suggests that it may participate in cancer cell proliferation by promoting mRNA translation. During human coronavirus SARS-CoV-2 infection, adds m6A modifications in SARS-CoV-2 RNA leading to decreased RIGI binding and subsequently dampening the sensing and activation of innate immune responses. This Homo sapiens (Human) protein is N(6)-adenosine-methyltransferase catalytic subunit METTL3.